The primary structure comprises 887 residues: Putative RNA-binding protein 15B (887 aa).

Positions 1–132 are disordered; it reads MKRQSERDSS…EPAGPGSTAA (132 aa). Over residues 10–20 the composition is skewed to low complexity; it reads SPSGRGSSSSA. Composition is skewed to basic and acidic residues over residues 22 to 34 and 65 to 77; these read RPREREREAEAGG and GHRDGRAAGDANH. The segment covering 83 to 94 has biased composition (gly residues); sequence RSSGAPGGGGRT. A compositionally biased stretch (low complexity) spans 95 to 110; sequence GKASGDPGAGGASPRA. Phosphoserine occurs at positions 107 and 111. Positions 111 to 122 are enriched in pro residues; it reads SPLPPPPPPPGA. The span at 123–132 shows a compositional bias: low complexity; it reads EPAGPGSTAA. An RRM 1 domain is found at 136–216; it reads KTLLISSLSP…RPLKVEPVYL (81 aa). A Glycyl lysine isopeptide (Lys-Gly) (interchain with G-Cter in SUMO2) cross-link involves residue lysine 210. Residues 215 to 249 form a disordered region; it reads YLRGGGSSRRSSSSSAAASTPPPGPPAPADPLGYL. A compositionally biased stretch (low complexity) spans 222 to 233; sequence SRRSSSSSAAAS. Positions 234–243 are enriched in pro residues; that stretch reads TPPPGPPAPA. 2 positions are modified to phosphoserine: serine 261 and serine 263. 2 RRM domains span residues 333 to 410 and 414 to 488; these read RNLF…YGKA and TRLW…FAKA. Position 529 is a phosphothreonine (threonine 529). Serine 549, serine 553, and serine 559 each carry phosphoserine. Residues 549–703 are disordered; sequence SLSKSSDRRN…TLEEPKHETK (155 aa). 3 stretches are compositionally biased toward basic and acidic residues: residues 570–613, 623–643, and 668–700; these read RSGE…ERSR, RGSDRTPERSRKENHSSEGTK, and EAPDSSHGKKTRESERNHRTTEAEPKTLEEPKH. Positions 590 to 594 match the Nuclear localization signal motif; sequence RRKRR. Lysine 699 is covalently cross-linked (Glycyl lysine isopeptide (Lys-Gly) (interchain with G-Cter in SUMO2)). In terms of domain architecture, SPOC spans 708–886; that stretch reads LSEYAQTLQL…HMVIVIVRDT (179 aa). The interaction with Epstein-Barr virus BMLF1 stretch occupies residues 719–887; that stretch reads WNGLLVLKNS…MVIVIVRDTA (169 aa).

The protein belongs to the RRM Spen family. As to quaternary structure, component of the WMM complex, a N6-methyltransferase complex composed of a catalytic subcomplex, named MAC, and of an associated subcomplex, named MACOM. The MAC subcomplex is composed of METTL3 and METTL14. The MACOM subcomplex is composed of WTAP, ZC3H13, CBLL1/HAKAI, VIRMA, and, in some cases of RBM15 (RBM15 or RBM15B). May interact with NCOR2. Interacts with NXF1, the interaction is required to promote mRNA export.

It localises to the nucleus. Its subcellular location is the nucleoplasm. The protein localises to the nucleus speckle. It is found in the nucleus envelope. RNA-binding protein that acts as a key regulator of N6-methyladenosine (m6A) methylation of RNAs, thereby regulating different processes, such as alternative splicing of mRNAs and X chromosome inactivation mediated by Xist RNA. Associated component of the WMM complex, a complex that mediates N6-methyladenosine (m6A) methylation of RNAs, a modification that plays a role in the efficiency of mRNA splicing and RNA processing. Plays a key role in m6A methylation, possibly by binding target RNAs and recruiting the WMM complex. Involved in random X inactivation mediated by Xist RNA: acts by binding Xist RNA and recruiting the WMM complex, which mediates m6A methylation, leading to target YTHDC1 reader on Xist RNA and promoting transcription repression activity of Xist. Functions in the regulation of alternative or illicit splicing, possibly by regulating m6A methylation. Inhibits pre-mRNA splicing. Also functions as a mRNA export factor by acting as a cofactor for the nuclear export receptor NXF1. This chain is Putative RNA-binding protein 15B (Rbm15b), found in Mus musculus (Mouse).